Here is a 90-residue protein sequence, read N- to C-terminus: Small ribosomal subunit protein bS16 (90 aa).

The protein belongs to the bacterial ribosomal protein bS16 family.

This Streptococcus equi subsp. zooepidemicus (strain H70) protein is Small ribosomal subunit protein bS16.